The chain runs to 249 residues: 4-hydroxy-tetrahydrodipicolinate reductase (249 aa).

NAD(+) contacts are provided by residues Asp32, 74–76, and 99–102; these read GTT and SANF. His134 functions as the Proton donor/acceptor in the catalytic mechanism. Residue His135 participates in (S)-2,3,4,5-tetrahydrodipicolinate binding. The Proton donor role is filled by Lys138. 144 to 145 lines the (S)-2,3,4,5-tetrahydrodipicolinate pocket; that stretch reads GT.

The protein belongs to the DapB family.

Its subcellular location is the cytoplasm. It catalyses the reaction (S)-2,3,4,5-tetrahydrodipicolinate + NAD(+) + H2O = (2S,4S)-4-hydroxy-2,3,4,5-tetrahydrodipicolinate + NADH + H(+). The enzyme catalyses (S)-2,3,4,5-tetrahydrodipicolinate + NADP(+) + H2O = (2S,4S)-4-hydroxy-2,3,4,5-tetrahydrodipicolinate + NADPH + H(+). The protein operates within amino-acid biosynthesis; L-lysine biosynthesis via DAP pathway; (S)-tetrahydrodipicolinate from L-aspartate: step 4/4. Catalyzes the conversion of 4-hydroxy-tetrahydrodipicolinate (HTPA) to tetrahydrodipicolinate. The protein is 4-hydroxy-tetrahydrodipicolinate reductase of Chlorobaculum parvum (strain DSM 263 / NCIMB 8327) (Chlorobium vibrioforme subsp. thiosulfatophilum).